The following is a 79-amino-acid chain: ATP synthase subunit c (79 aa).

A run of 2 helical transmembrane segments spans residues 11 to 31 and 53 to 73; these read IAAAIMMGLSAIGAAVGIGIL and FFIVMGLVDAIPMITVGLSLY.

It belongs to the ATPase C chain family. F-type ATPases have 2 components, F(1) - the catalytic core - and F(0) - the membrane proton channel. F(1) has five subunits: alpha(3), beta(3), gamma(1), delta(1), epsilon(1). F(0) has three main subunits: a(1), b(2) and c(10-14). The alpha and beta chains form an alternating ring which encloses part of the gamma chain. F(1) is attached to F(0) by a central stalk formed by the gamma and epsilon chains, while a peripheral stalk is formed by the delta and b chains.

The protein resides in the cell inner membrane. Functionally, f(1)F(0) ATP synthase produces ATP from ADP in the presence of a proton or sodium gradient. F-type ATPases consist of two structural domains, F(1) containing the extramembraneous catalytic core and F(0) containing the membrane proton channel, linked together by a central stalk and a peripheral stalk. During catalysis, ATP synthesis in the catalytic domain of F(1) is coupled via a rotary mechanism of the central stalk subunits to proton translocation. Key component of the F(0) channel; it plays a direct role in translocation across the membrane. A homomeric c-ring of between 10-14 subunits forms the central stalk rotor element with the F(1) delta and epsilon subunits. The chain is ATP synthase subunit c from Blochmanniella floridana.